The sequence spans 714 residues: A-kinase anchor protein 5 (714 aa).

Disordered regions lie at residues 1–146 and 243–333; these read METS…GYVR and VLEN…VGHT. The tract at residues 1–164 is essential to the intracellular anchoring function; it reads METSVSEIQI…EIKAQIQPDE (164 aa). Phosphoserine is present on residues Ser-4 and Ser-22. Positions 10-32 are enriched in basic and acidic residues; that stretch reads IETKDEKRPEAASPQKERQERKT. Cys-36 is lipidated: S-palmitoyl cysteine. A compositionally biased stretch (basic residues) spans 37–50; sequence FKRRKKVNKKKAKA. 2 stretches are compositionally biased toward basic and acidic residues: residues 54–63 and 88–100; these read TAEETEKHAP and KPSE…KPSE. The AKAP CaM-binding signature appears at 74 to 94; the sequence is AGAWASIKRLVTHRKPSESAE. The S-palmitoyl cysteine moiety is linked to residue Cys-123. The segment covering 243 to 268 has biased composition (polar residues); sequence VLENSAADSPQPVTSTAPLSPATTHQ. The span at 285-301 shows a compositional bias: basic and acidic residues; the sequence is GKDDGRRKTAAEEKKSG. A 1; approximate repeat occupies 305–312; that stretch reads LGQAEEAS. The 28 X 8 AA repeats of V-G-Q-A-E-E-A-T stretch occupies residues 305 to 597; the sequence is LGQAEEASSV…PIVGQAEETV (293 aa). A compositionally biased stretch (polar residues) spans 310-323; sequence EASSVSQADKSVLS. Residues 322–329 form a 2; approximate repeat; that stretch reads LSQAEEAT. Residues 330 to 337 form a 3; approximate repeat; sequence VGHTEEAT. A 4; approximate repeat occupies 350-357; the sequence is LSQAEEAT. A 5; approximate repeat occupies 358-365; it reads VAQAKETV. The stretch at 366-373 is one 6; approximate repeat; sequence LSQAEEVK. The stretch at 398 to 405 is one 7; approximate repeat; sequence VSQAEEAI. The 8; approximate repeat unit spans residues 414–421; sequence MGQAEEAT. 5 repeat units span residues 430–437, 438–445, 446–453, 454–461, and 462–469. The 14; approximate repeat unit spans residues 470–477; the sequence is VGQAGEAT. The stretch at 486–493 is one 15; approximate repeat; sequence VGQAEEAI. Tandem repeats lie at residues 494–501, 502–509, 510–517, and 518–525. One copy of the 20; approximate repeat lies at 526-533; the sequence is VDQAEEAT. Repeat 21 spans residues 534-541; sequence VGQAEEAT. The 22; approximate repeat unit spans residues 542 to 549; that stretch reads VGQAGEAA. One copy of the 23; approximate repeat lies at 550 to 557; the sequence is VGQAEEAI. The 24; approximate repeat unit spans residues 558-565; it reads VAQAEEAT. Repeat 25 spans residues 566–573; it reads VGQAGEAT. One copy of the 26; approximate repeat lies at 574-581; sequence VGQAEKAT. A 27; approximate repeat occupies 582-589; it reads VGQAEEPI. The 28; approximate repeat unit spans residues 590–597; that stretch reads VGQAEETV. Residues 675–696 form an RII-beta subunit binding domain region; sequence YETLLIETASSLVKNAIELSVE. Residues 697–714 are tethers NFATC2 to CRAC channels; it reads QLVNEMVSEDNQINTLFQ.

In terms of assembly, binding protein for dimer of the RII-beta regulatory subunit of cAMP-dependent protein kinase (PKA) and also for the protein kinase C (PKC) and the phosphatase calcineurin (PP2B). Each enzyme is inhibited when bound to the anchoring protein. Also binds the beta2-adrenergic receptor. Part of a complex containing AKAP5, ADCY5, ADCY6 and PDE4C. Interacts with ADCY8, and enhances its phosphorylation at lipid rafts. Interacts with ORAI1 (isoform alpha) (via N-terminus) upon store depletion and in response to LTC4. Does not interact with ORAI2 and ORAI3 paralogs. Interacts (via leucine zipper domain) with NFATC2/NFAT1. Interacts with calmodulin; the interaction is calcium-independent. Interacts with KCNQ2; the interaction may help KCNQ2 channel complex to retain calcium-bound calmodulin. Interacts with KCNK2; the channel is recruited to postsynaptic microdomains by AKAP5 where it can integrate neurotransmitter receptor signals. Part of a complex composed of AKAP5 and ADRB2. In terms of processing, palmitoylated. Palmitoylation at Cys-36 and Cys-123 plays a key role in the targeting of AKAP5 to lipid rafts. Palmitoylation by ZDHHC2 is required for AKAP5 function in LTP-stimulated recycling endosome exocytosis.

The protein resides in the postsynaptic recycling endosome membrane. It localises to the cell projection. The protein localises to the dendrite. It is found in the postsynaptic cell membrane. Functionally, multivalent scaffold protein that anchors the cAMP-dependent protein kinase/PKA to cytoskeletal and/or organelle-associated proteins, targeting the signal carried by cAMP to specific intracellular effectors. Association with the beta2-adrenergic receptor (beta2-AR) not only regulates beta2-AR signaling pathway, but also the activation by PKA by switching off the beta2-AR signaling cascade. Plays a role in long term synaptic potentiation by regulating protein trafficking from the dendritic recycling endosomes to the plasma membrane and controlling both structural and functional plasticity at excitatory synapses. In hippocampal pyramidal neurons, recruits KCNK2/TREK-1 channel at postsynaptic dense bodies microdomains and converts it to a leak channel no longer sensitive to stimulation by arachidonic acid, acidic pH or mechanical stress, nor inhibited by Gq-coupled receptors but still under the negative control of Gs-coupled receptors. Associates with ORAI1 pore-forming subunit of CRAC channels in Ca(2+) signaling microdomains where it recruits NFATC2/NFAT1 and couples store-operated Ca(2+) influx to calmodulin and calcineurin signaling and activation of NFAT-dependent transcriptional responses. The chain is A-kinase anchor protein 5 (Akap5) from Rattus norvegicus (Rat).